The following is a 264-amino-acid chain: MKQYLELMQKVLDEGTQKNDRTGTGTLSIFGHQMRFNLQDGFPLVTTKRCHLRSIIHELLWFLQGDTNIAYLHENNVTIWDEWADENGDLGPVYGKQWRAWPTPDGRHIDQITTVLNQLKNDPDSRRIIVSAWNVGELDKMALAPCHAFFQFYVADGKLSCQLYQRSCDVFLGLPFNIASYALLVHMMAQQCDLEVGDFVWTGGDTHLYSNHMDQTHLQLSREPRPLPKLIIKRKPESIFDYRFEDFEIEGYDPHPGVKAPVAI.

Arg21 lines the dUMP pocket. His51 contributes to the (6R)-5,10-methylene-5,6,7,8-tetrahydrofolate binding site. 126-127 (RR) is a dUMP binding site. Cys146 functions as the Nucleophile in the catalytic mechanism. Residues 166–169 (RSCD), Asn177, and 207–209 (HLY) contribute to the dUMP site. (6R)-5,10-methylene-5,6,7,8-tetrahydrofolate is bound at residue Asp169. Position 263 (Ala263) interacts with (6R)-5,10-methylene-5,6,7,8-tetrahydrofolate.

It belongs to the thymidylate synthase family. Bacterial-type ThyA subfamily. Homodimer.

The protein resides in the cytoplasm. The catalysed reaction is dUMP + (6R)-5,10-methylene-5,6,7,8-tetrahydrofolate = 7,8-dihydrofolate + dTMP. It functions in the pathway pyrimidine metabolism; dTTP biosynthesis. Catalyzes the reductive methylation of 2'-deoxyuridine-5'-monophosphate (dUMP) to 2'-deoxythymidine-5'-monophosphate (dTMP) while utilizing 5,10-methylenetetrahydrofolate (mTHF) as the methyl donor and reductant in the reaction, yielding dihydrofolate (DHF) as a by-product. This enzymatic reaction provides an intracellular de novo source of dTMP, an essential precursor for DNA biosynthesis. The polypeptide is Thymidylate synthase (Shigella flexneri serotype 5b (strain 8401)).